A 157-amino-acid chain; its full sequence is S-ribosylhomocysteine lyase (157 aa).

Fe cation-binding residues include His-54, His-58, and Cys-124.

The protein belongs to the LuxS family. In terms of assembly, homodimer. Fe cation is required as a cofactor.

The enzyme catalyses S-(5-deoxy-D-ribos-5-yl)-L-homocysteine = (S)-4,5-dihydroxypentane-2,3-dione + L-homocysteine. Its function is as follows. Involved in the synthesis of autoinducer 2 (AI-2) which is secreted by bacteria and is used to communicate both the cell density and the metabolic potential of the environment. The regulation of gene expression in response to changes in cell density is called quorum sensing. Catalyzes the transformation of S-ribosylhomocysteine (RHC) to homocysteine (HC) and 4,5-dihydroxy-2,3-pentadione (DPD). The protein is S-ribosylhomocysteine lyase of Pediococcus pentosaceus (strain ATCC 25745 / CCUG 21536 / LMG 10740 / 183-1w).